The sequence spans 213 residues: Ras-related protein Rab-25 (213 aa).

GTP-binding residues include serine 21, glycine 24, lysine 25, threonine 26, asparagine 27, serine 38, histidine 39, threonine 43, and threonine 44. Residue threonine 26 coordinates Mg(2+). 2 consecutive short sequence motifs (switch) follow at residues 35-49 (NEFS…GVEF) and 67-84 (DTAG…YYRG). Positions 44 and 67 each coordinate Mg(2+). GTP is bound by residues glycine 70, asparagine 125, lysine 126, aspartate 128, alanine 156, and leucine 157. 2 S-geranylgeranyl cysteine lipidation sites follow: cysteine 209 and cysteine 210. The residue at position 210 (cysteine 210) is a Cysteine methyl ester. A propeptide spans 211 to 213 (ISL) (removed in mature form).

The protein belongs to the small GTPase superfamily. Rab family. In terms of assembly, interacts (GTP-bound form) with RAB11FIP1, RAB11FIP2, RAB11FIP3 and RAB11FIP4. Interacts (via the hypervariable C-terminal region) with ITGB1 (via the cytoplasmic region); the interaction is GTP-dependent. Interacts with ITGAV. Associates with the integrin alpha-V/beta-1 heterodimer. Interacts with VPS33B. It depends on Mg(2+) as a cofactor.

It localises to the cell membrane. It is found in the cell projection. The protein resides in the pseudopodium membrane. The protein localises to the cytoplasmic vesicle. The catalysed reaction is GTP + H2O = GDP + phosphate + H(+). Regulated by guanine nucleotide exchange factors (GEFs) which promote the exchange of bound GDP for free GTP. Regulated by GTPase activating proteins (GAPs) which increase the GTP hydrolysis activity. Inhibited by GDP dissociation inhibitors (GDIs) which prevent Rab-GDP dissociation. Functionally, the small GTPases Rab are key regulators of intracellular membrane trafficking, from the formation of transport vesicles to their fusion with membranes. Rabs cycle between an inactive GDP-bound form and an active GTP-bound form that is able to recruit to membranes different set of downstream effectors directly responsible for vesicle formation, movement, tethering and fusion. RAB25 regulates epithelial cell differentiation, proliferation and survival, thereby playing key roles in tumorigenesis. Promotes invasive migration of cells in which it functions to localize and maintain integrin alpha-V/beta-1 at the tips of extending pseudopodia. Involved in the regulation of epithelial morphogenesis through the control of CLDN4 expression and localization at tight junctions. May selectively regulate the apical recycling pathway. Together with MYO5B regulates transcytosis. This chain is Ras-related protein Rab-25 (RAB25), found in Bos taurus (Bovine).